We begin with the raw amino-acid sequence, 228 residues long: FtsZ-localized protein A (228 aa).

The GST N-terminal domain maps to 3 to 85 (VERTLHHFPL…HIEETETEPP (83 aa)). The 134-residue stretch at 90–223 (DPAERAEARR…WPGLAPAAHY (134 aa)) folds into the GST C-terminal domain.

Belongs to the GST superfamily. As to quaternary structure, homodimer. Interacts with FtsZ filaments. Probably interacts with the GTPase domain of FtsZ.

Its subcellular location is the cytoplasm. Essential cell division protein that must bind to FtsZ for division to occur. Critical coordinator of envelope constriction through its interaction with FtsZ. Promotes the formation of highly curved FtsZ filaments, reduces the GTPase activity of FtsZ and stabilizes FtsZ polymers. May regulate FtsZ function by modulating its superstructure. Does not bind to glutathione. The protein is FtsZ-localized protein A of Caulobacter vibrioides (strain NA1000 / CB15N) (Caulobacter crescentus).